A 174-amino-acid chain; its full sequence is RNA pyrophosphohydrolase (174 aa).

In terms of domain architecture, Nudix hydrolase spans 6-149; sequence GFRANVGIII…KRDVYRKVMK (144 aa). The Nudix box signature appears at 38-59; the sequence is GGVDEGESAEQAMYRELYEEVG.

The protein belongs to the Nudix hydrolase family. RppH subfamily. A divalent metal cation serves as cofactor.

Accelerates the degradation of transcripts by removing pyrophosphate from the 5'-end of triphosphorylated RNA, leading to a more labile monophosphorylated state that can stimulate subsequent ribonuclease cleavage. The protein is RNA pyrophosphohydrolase of Shewanella loihica (strain ATCC BAA-1088 / PV-4).